A 138-amino-acid polypeptide reads, in one-letter code: Envelope glycoprotein N (138 aa).

The N-terminal stretch at 1–21 is a signal peptide; that stretch reads MEWNTLVLGLLVLSVVAESSG. The Virion surface portion of the chain corresponds to 22–101; the sequence is NNSSTSTSAT…SHMYELSLSS (80 aa). Residues 102–122 form a helical membrane-spanning segment; the sequence is FAAWWTMLNALILMGAFCIVL. Residues 123–138 are Intravirion-facing; the sequence is RHCCFQNFTATTTKGY.

This sequence belongs to the herpesviridae glycoprotein N family. In terms of assembly, interacts (via N-terminus) with gM (via N-terminus). The gM-gN heterodimer forms the gCII complex. Post-translationally, O-glycosylated.

The protein resides in the virion membrane. It localises to the host membrane. It is found in the host Golgi apparatus. The protein localises to the host trans-Golgi network. Functionally, envelope glycoprotein necessary for proper maturation of gM and modulation of its membrane fusion activity. Also plays a critical role in virion morphogenesis. The protein is Envelope glycoprotein N of Human cytomegalovirus (strain AD169) (HHV-5).